Consider the following 397-residue polypeptide: Ethanolaminephosphotransferase 1 (397 aa).

At A2 the chain carries N-acetylalanine. 10 consecutive transmembrane segments (helical) span residues 47–69 (WLAPNLITFSGFLLVVFNFLLMA), 84–103 (HVPDWVWIVVGILNFVAYTL), 123–145 (LFDHGLDSWSCVYFVVTVYSIFG), 150–172 (GVSVFVLYLLLWVVLFSFILSHW), 179–201 (ILFLPWGYDISQVTISFVYIVTA), 221–243 (LFTAMIIGCALCVTLPMSLLNFF), 256–278 (VYEAMVPLFSPCLLFILSTAWIL), 291–310 (VFYFMVGTAFANSTCQLIVC), 317–339 (CPTLNWLLVPLFLVVLVVNLGVA), and 344–366 (SILLYTLTTAFTLAHIHYGVRVV). Position 387 (U387) is a non-standard amino acid, selenocysteine.

This sequence belongs to the CDP-alcohol phosphatidyltransferase class-I family. Requires Mg(2+) as cofactor. Mn(2+) serves as cofactor. Widely expressed. Abundant in brain, placenta, liver and pancreas, followed by heart, skeletal muscle, lung and kidney. In brain it is strongly expressed in cerebellum, followed by the occipital pole and the frontal lobe.

It is found in the endoplasmic reticulum membrane. It catalyses the reaction CDP-ethanolamine + a 1,2-diacyl-sn-glycerol = a 1,2-diacyl-sn-glycero-3-phosphoethanolamine + CMP + H(+). It carries out the reaction 1-O-alkyl-2-acyl-sn-glycerol + CDP-ethanolamine = a 1-O-alkyl-2-acyl-sn-glycero-3-phosphoethanolamine + CMP + H(+). Its pathway is phospholipid metabolism; phosphatidylethanolamine biosynthesis; phosphatidylethanolamine from ethanolamine: step 3/3. Ethanolaminephosphotransferase that catalyzes the transfer of phosphoethanolamine (PE) from CDP-ethanolamine to lipid acceptors, the final step in the synthesis of PE via the 'Kennedy' pathway. PE is the second most abundant phospholipid of membranes in mammals and is involved in various membrane-related cellular processes. The enzyme is critical for the synthesis of several PE species and also catalyzes the synthesis of plasmanyl-PE, a lipid required for proper myelination and neurodevelopment, from 1-alkyl-2-acylglycerol. The protein is Ethanolaminephosphotransferase 1 of Homo sapiens (Human).